The following is a 1494-amino-acid chain: Serine/threonine-protein kinase VPS15 (1494 aa).

A lipid anchor (N-myristoyl glycine) is attached at Gly-2. A Protein kinase domain is found at 27–307 (LVLKEVLGRG…VFPNYFSPFL (281 aa)). ATP-binding positions include 33 to 41 (LGRGRFLKS) and Lys-54. Residue Asp-149 is the Proton acceptor of the active site. HEAT repeat units lie at residues 383–421 (NSKDEIFYSISDALKKNRHPFLKKITMDDLGTLMSLYDS), 480–517 (DRLQRVLPYVVALLSDPTAIVRCAAMETLCDILPLVRD), 524–562 (KIFPEYIFPMLSMLPEDTEESVRICYASNIAKLALTAYG), 610–646 (KTIAEVVQELVMGPKQTPNVRRALLQDIGELCFFFGQ), 648–685 (QSNDFLLPILPAFLNDRDEQLRSVFFEKIVYVCFFVGQ), 687–724 (SVEEYLLPYIDQALSDQTEAVIVNALECLSTLCKSSFL), and 727–764 (RALLQMIECVYPLLCYPSQWVRRAVVTFIAASSECLGA). 2 disordered regions span residues 859–903 (QSVE…TVEL) and 1037–1064 (SASVTSEDASSPADLVGEPSLSRTSVPD). Low complexity predominate over residues 1037–1047 (SASVTSEDASS). 7 WD repeats span residues 1079-1118 (EHRSAVNDIATSSDHSFFVSASDDSTVKVWDSRKLEKDIS), 1127-1166 (LEGSRGMCTTMLRNSTQVVVGASDGVIHMFSIDHISRGLG), 1184-1226 (KEGA…DAWT), 1231-1270 (PEEGYVSSLVTSPCGNWFVSGSSRGVLTLWDLRFRVPVNS), 1276-1323 (ICPI…CHQV), 1371-1409 (PRLPGIRSLLPLPGGDLLTGGTDLKIRRWDYSSPERSYC), and 1466-1494 (DSVQSLASVKLNQRLLISSSRDGAIKVWK).

The protein belongs to the protein kinase superfamily. Ser/Thr protein kinase family. In terms of assembly, interacts with VPS34. Component of a complex made of VPS38/USL1 and PI3K main subunits such as VPS15, ATG6/VPS30 and VPS34. Post-translationally, autophosphorylated. In terms of tissue distribution, mainly expressed in anthers, pollen grains and pollen tubes, and, to a lower extent, in other tissues and organs including seedlings, roots, stems, leaves, flowers, pitils and siliques.

It is found in the cytoplasm. The protein localises to the golgi apparatus. Its subcellular location is the trans-Golgi network membrane. The protein resides in the endosome membrane. The catalysed reaction is L-seryl-[protein] + ATP = O-phospho-L-seryl-[protein] + ADP + H(+). It carries out the reaction L-threonyl-[protein] + ATP = O-phospho-L-threonyl-[protein] + ADP + H(+). Serine/threonine-protein kinase required for cytoplasm to vacuole transport (Cvt) and autophagy as a part of the autophagy-specific VPS34 PI3-kinase complex I. Required for pollen development and germination, probably via the modulation of phosphatidylinositol 3-phosphate (PI3P) formation and vacuolar organization. The polypeptide is Serine/threonine-protein kinase VPS15 (Arabidopsis thaliana (Mouse-ear cress)).